An 808-amino-acid polypeptide reads, in one-letter code: MSISDDISPVPPAPVSEPNAGQDAGQDAAPAHMAARAEALRDQLNYHSHRYYVLDDAEISDAEYDALFRELQDIEAEWPSLRTPDSPTHRVGDTVVAALETQAHTLRMYSLDNAFSAEEWDGFIQRMLRAEPDAPTAFWCDPKMDGLALEVIYENGVFTTALTRGDGEKGEIVTTAMRTVRNLPLRLHGEGPHPARLEVRGEVVITRAEFDALNAARRGAGEKLFANPRNAAAGSVRQLDASVTAGRPLRFLAYGVGQVVWPAETSDGAASAAQGPEARWATHGQVMAALADYGFGTPPDARRCETPAQVMAYYEDLGRRRSELPFDIDGVVAKLDDLSAQAALGYTARAPRWAIALKFPAHQATTRLEHIAIQVGRTGVLTPVAELAPVAVGGVTVSRATLHNEDEIRAKDLRVGDMVVVQRAGDVIPEVVRPLVDQRPASGLPEFEFPAECPVCHTPVRREPGEAAWRCVNVGCPAVVRQSIIHFVSKAGLDIQGVGRRWVELLVDRGKVTSPADLFGLDKQTLLAFERMGPKLAENFIAAFDTARTGATLNRLICALGIRHVGEQTARTLAAHFADLDALGAAQAETLQQLPDIGPEVAASIRAFFANEGNRALLERLRGVGLWPVRPVRPEADAAGAPGEGSGPLAGLRVLFTGSLTTLTRSDAERRAVAAGANILGSVSKKLDLLVVGDKPGSKLDKATKLGIRVLREQEFLDLLEGRGGDVPEDGDGAPGNEDEAPEVSADVPAAPEVLADAPAAISADASSGVAPGVSGGPDRADMTDRTVRTDSVDAPAMPRKKDQHSLL.

Residues 1–30 form a disordered region; sequence MSISDDISPVPPAPVSEPNAGQDAGQDAAP. Residues 18–30 are compositionally biased toward low complexity; that stretch reads PNAGQDAGQDAAP. NAD(+) contacts are provided by residues 61–65, 110–111, and Asp-141; these read DAEYD and SL. The active-site N6-AMP-lysine intermediate is the Lys-143. The NAD(+) site is built by Arg-164, Glu-202, Lys-334, and Lys-358. The Zn(2+) site is built by Cys-453, Cys-456, Cys-471, and Cys-476. One can recognise a BRCT domain in the interval 644–733; sequence EGSGPLAGLR…GGDVPEDGDG (90 aa). Residues 720-808 are disordered; that stretch reads LEGRGGDVPE…PRKKDQHSLL (89 aa). Residues 727–742 show a composition bias toward acidic residues; the sequence is VPEDGDGAPGNEDEAP. Low complexity predominate over residues 746–773; sequence ADVPAAPEVLADAPAAISADASSGVAPG. The span at 779–792 shows a compositional bias: basic and acidic residues; that stretch reads DRADMTDRTVRTDS.

This sequence belongs to the NAD-dependent DNA ligase family. LigA subfamily. It depends on Mg(2+) as a cofactor. Mn(2+) is required as a cofactor.

The catalysed reaction is NAD(+) + (deoxyribonucleotide)n-3'-hydroxyl + 5'-phospho-(deoxyribonucleotide)m = (deoxyribonucleotide)n+m + AMP + beta-nicotinamide D-nucleotide.. In terms of biological role, DNA ligase that catalyzes the formation of phosphodiester linkages between 5'-phosphoryl and 3'-hydroxyl groups in double-stranded DNA using NAD as a coenzyme and as the energy source for the reaction. It is essential for DNA replication and repair of damaged DNA. The polypeptide is DNA ligase (Nitratidesulfovibrio vulgaris (strain DSM 19637 / Miyazaki F) (Desulfovibrio vulgaris)).